The chain runs to 646 residues: Protein real-time (646 aa).

The 174-residue stretch at 2–175 folds into the PRELI/MSF1 domain; it reads VQKYESPVRI…FINELKKEGI (174 aa). Residues 294–471 enclose the CRAL-TRIO domain; it reads TPVVVEKYFP…FLGGSCITMI (178 aa). The 148-residue stretch at 499–646 folds into the GOLD domain; sequence HHGLYKSVDL…GFSSNSLQSR (148 aa).

The protein localises to the mitochondrion. This is Protein real-time from Aedes aegypti (Yellowfever mosquito).